Consider the following 237-residue polypeptide: Ribosomal RNA small subunit methyltransferase G (237 aa).

Residues Gly78, Phe83, Ala129–Glu130, and Arg148 contribute to the S-adenosyl-L-methionine site. Residues Lys218–Leu237 form a disordered region.

Belongs to the methyltransferase superfamily. RNA methyltransferase RsmG family.

The protein resides in the cytoplasm. Its function is as follows. Specifically methylates the N7 position of a guanine in 16S rRNA. The protein is Ribosomal RNA small subunit methyltransferase G of Streptococcus pneumoniae (strain JJA).